The primary structure comprises 118 residues: MAGLMKLACLIFACMIVAGPITSNAALSCGTVSGYVAPCIGYLAQNAPAVPTACCSGVTSLNNMARTTPDRQQACRCLVGAANALPTINVARAAGLPKACGVNIPYKISKTTNCNSVK.

A signal peptide spans methionine 1–alanine 25. Disulfide bonds link cysteine 29/cysteine 77, cysteine 39/cysteine 54, cysteine 55/cysteine 100, and cysteine 75/cysteine 114.

The protein belongs to the plant LTP family.

Functionally, plant non-specific lipid-transfer proteins transfer phospholipids as well as galactolipids across membranes. May play a role in wax or cutin deposition in the cell walls of expanding epidermal cells and certain secretory tissues. The protein is Non-specific lipid-transfer protein D (WAX9D) of Brassica oleracea var. italica (Broccoli).